We begin with the raw amino-acid sequence, 378 residues long: Integrator complex assembly factor WDR73 (378 aa).

6 WD repeats span residues 73-113 (DFKV…VWQV), 121-163 (KAVS…VVDL), 167-205 (KTTY…LVDT), 214-255 (NRSP…LLDP), 266-305 (QCPV…VYDA), and 322-371 (EPLF…VWDW).

The protein belongs to the WD repeat WDR73 family. In terms of assembly, interacts with INTS9 and INTS11; the interaction is direct. Part of the multiprotein complex composed of BRAT1, WDR73, as well as integrator complex subunits INTS9 and INTS11. In terms of tissue distribution, expressed in kidney and brain. In the kidney, expressed in glomeruli, most probably in podocytes, and in tubules (at protein level). In the brain, expressed in the cerebellum, with high levels in Purkinje cells and their projecting axons, in the deep cerebellar nuclei and in pyramidal neurons of the cerebral cortex (at protein level). In the white matter, mainly present in astrocytes, but not in oligodendrocytes (at protein level). Also highly expressed in endothelial cells of cerebral capillaries (at protein level).

The protein localises to the cytoplasm. The protein resides in the cytoskeleton. It is found in the spindle. Its subcellular location is the spindle pole. It localises to the cleavage furrow. Its function is as follows. Component of a multiprotein complex required for the assembly of the RNA endonuclease module of the integrator complex. Associates with INTS9 and INTS11 in the cytoplasm, stabilizing the INTS9-INTS11 heterodimer and blocking the active site of INTS11. BRAT1 then joins the complex and plugs the active site of INTS11, leading to WDR73 release and nuclear import of INTS9 and INTS11. This Homo sapiens (Human) protein is Integrator complex assembly factor WDR73.